Consider the following 413-residue polypeptide: MQKRVVILLLDSFGIGASEDAKDFGDLGANTLGNIAKACFNNLADSNDRSGALKLPYLESLGLGLSALKAANELPLGFQSQPNLIGAYAYAQELSSAKDTISGHWEMMGAPVLFEWGYFKDKTHSFPKEILDEIVRKTKIKGYLGNCHASGTEIIKDLGEKHLETLYPIFYTSADSVFQIAAHEERFGLDNLYALCEEAFQILEPLKIARVIARPFIGTNRESFKRTANRKDYAIKPHKKLLFETFIEEKRGEVISIGKIADIYAHVGITQKFKAGSLMELCDVTLEQVKNAKNNSLIFTNFVHFDSDYGHRRDISGYANALEYFDARLKEVLENLRENDLLILCADHGCDPSFKGTDHTREYIPVLFYHKDLQPAFLGKSESFADIGQSIAHFLGLSPLDYGKNLLNFKGQP.

6 residues coordinate Mn(2+): D11, D306, H311, D347, H348, and H359.

Belongs to the phosphopentomutase family. Requires Mn(2+) as cofactor.

The protein localises to the cytoplasm. The catalysed reaction is 2-deoxy-alpha-D-ribose 1-phosphate = 2-deoxy-D-ribose 5-phosphate. It catalyses the reaction alpha-D-ribose 1-phosphate = D-ribose 5-phosphate. The protein operates within carbohydrate degradation; 2-deoxy-D-ribose 1-phosphate degradation; D-glyceraldehyde 3-phosphate and acetaldehyde from 2-deoxy-alpha-D-ribose 1-phosphate: step 1/2. Its function is as follows. Isomerase that catalyzes the conversion of deoxy-ribose 1-phosphate (dRib-1-P) and ribose 1-phosphate (Rib-1-P) to deoxy-ribose 5-phosphate (dRib-5-P) and ribose 5-phosphate (Rib-5-P), respectively. The protein is Phosphopentomutase of Helicobacter pylori (strain ATCC 700392 / 26695) (Campylobacter pylori).